We begin with the raw amino-acid sequence, 391 residues long: Aspartate aminotransferase (391 aa).

The L-aspartate site is built by G40 and N176. K236 is subject to N6-(pyridoxal phosphate)lysine. R366 is a binding site for L-aspartate.

It belongs to the class-I pyridoxal-phosphate-dependent aminotransferase family. As to quaternary structure, homodimer. The cofactor is pyridoxal 5'-phosphate.

The protein localises to the cytoplasm. It carries out the reaction L-aspartate + 2-oxoglutarate = oxaloacetate + L-glutamate. This is Aspartate aminotransferase (aspC) from Pyrococcus horikoshii (strain ATCC 700860 / DSM 12428 / JCM 9974 / NBRC 100139 / OT-3).